A 457-amino-acid polypeptide reads, in one-letter code: Siroheme synthase (457 aa).

Residues 1 to 204 (MDHLPIFCQL…ADEKAVNATT (204 aa)) are precorrin-2 dehydrogenase /sirohydrochlorin ferrochelatase. NAD(+) is bound by residues 22–23 (DV) and 43–44 (LT). Serine 128 carries the phosphoserine modification. The uroporphyrinogen-III C-methyltransferase stretch occupies residues 216–457 (GEVVLVGAGP…RDKLNWFSNY (242 aa)). Proline 225 serves as a coordination point for S-adenosyl-L-methionine. Aspartate 248 (proton acceptor) is an active-site residue. Lysine 270 serves as the catalytic Proton donor. S-adenosyl-L-methionine is bound by residues 301 to 303 (GGD), isoleucine 306, 331 to 332 (TA), methionine 382, and glycine 411.

In the N-terminal section; belongs to the precorrin-2 dehydrogenase / sirohydrochlorin ferrochelatase family. It in the C-terminal section; belongs to the precorrin methyltransferase family.

The catalysed reaction is uroporphyrinogen III + 2 S-adenosyl-L-methionine = precorrin-2 + 2 S-adenosyl-L-homocysteine + H(+). It catalyses the reaction precorrin-2 + NAD(+) = sirohydrochlorin + NADH + 2 H(+). It carries out the reaction siroheme + 2 H(+) = sirohydrochlorin + Fe(2+). Its pathway is cofactor biosynthesis; adenosylcobalamin biosynthesis; precorrin-2 from uroporphyrinogen III: step 1/1. It functions in the pathway cofactor biosynthesis; adenosylcobalamin biosynthesis; sirohydrochlorin from precorrin-2: step 1/1. The protein operates within porphyrin-containing compound metabolism; siroheme biosynthesis; precorrin-2 from uroporphyrinogen III: step 1/1. It participates in porphyrin-containing compound metabolism; siroheme biosynthesis; siroheme from sirohydrochlorin: step 1/1. Its pathway is porphyrin-containing compound metabolism; siroheme biosynthesis; sirohydrochlorin from precorrin-2: step 1/1. Multifunctional enzyme that catalyzes the SAM-dependent methylations of uroporphyrinogen III at position C-2 and C-7 to form precorrin-2 via precorrin-1. Then it catalyzes the NAD-dependent ring dehydrogenation of precorrin-2 to yield sirohydrochlorin. Finally, it catalyzes the ferrochelation of sirohydrochlorin to yield siroheme. This Salmonella gallinarum (strain 287/91 / NCTC 13346) protein is Siroheme synthase.